A 160-amino-acid chain; its full sequence is Arginine repressor (160 aa).

This sequence belongs to the ArgR family.

It is found in the cytoplasm. Its pathway is amino-acid biosynthesis; L-arginine biosynthesis [regulation]. Regulates arginine biosynthesis genes. The polypeptide is Arginine repressor (Anaeromyxobacter dehalogenans (strain 2CP-1 / ATCC BAA-258)).